A 478-amino-acid chain; its full sequence is Zinc metalloproteinase/disintegrin (478 aa).

The signal sequence occupies residues 1–20; that stretch reads MIQVLLVTICLAAFPYQGSS. Residues 21-187 constitute a propeptide that is removed on maturation; it reads IILESGNVND…PIKKASHLNL (167 aa). The 197-residue stretch at 193–389 folds into the Peptidase M12B domain; that stretch reads RYVEIVIVVD…QKPQCILKKP (197 aa). 3 disulfide bridges follow: C304/C384, C344/C368, and C346/C351. H329 is a binding site for Zn(2+). E330 is a catalytic residue. Positions 333 and 339 each coordinate Zn(2+). The propeptide occupies 390 to 408; it reads LRTDTVSTPVSGNELLEAR. Positions 397–478 constitute a Disintegrin domain; sequence TPVSGNELLE…ADCPRNVLYG (82 aa). Disulfide bonds link C411-C420, C413-C421, C426-C440, C434-C464, C439-C443, and C452-C471. Positions 474–478 are excised as a propeptide; that stretch reads NVLYG.

It belongs to the venom metalloproteinase (M12B) family. P-II subfamily. P-IIa sub-subfamily. Zn(2+) serves as cofactor. As to expression, expressed by the venom gland.

The protein resides in the secreted. Its function is as follows. Snake venom zinc metalloproteinase that causes hemorrhage by provoking the degradation of the sub-endothelial matrix proteins (fibronectin, laminin, type IV collagen, nidogen, and gelatins). Functionally, displays low cytotoxicity. In vitro, inhibits cancer cell migration (human breast cancer cell line MDA-MB-231) with a significant rate after 24 hours of incubation. The protein is Zinc metalloproteinase/disintegrin (MPII) of Crotalus durissus collilineatus (Brazilian rattlesnake).